Consider the following 77-residue polypeptide: Sec-independent protein translocase protein TatA (77 aa).

The chain crosses the membrane as a helical span at residues 1 to 21 (MGSFSIWHWLVVGILVLLLFG). A disordered region spans residues 41–77 (KGMSEDDAPTPAPKQIDAQRAPDLSATPTPTAETENR). Residues 66–77 (ATPTPTAETENR) show a composition bias toward polar residues.

This sequence belongs to the TatA/E family. The Tat system comprises two distinct complexes: a TatABC complex, containing multiple copies of TatA, TatB and TatC subunits, and a separate TatA complex, containing only TatA subunits. Substrates initially bind to the TatABC complex, which probably triggers association of the separate TatA complex to form the active translocon.

The protein resides in the cell inner membrane. In terms of biological role, part of the twin-arginine translocation (Tat) system that transports large folded proteins containing a characteristic twin-arginine motif in their signal peptide across membranes. TatA could form the protein-conducting channel of the Tat system. This is Sec-independent protein translocase protein TatA from Sphingopyxis alaskensis (strain DSM 13593 / LMG 18877 / RB2256) (Sphingomonas alaskensis).